The following is a 479-amino-acid chain: Ribulose bisphosphate carboxylase large chain (479 aa).

Positions 1–2 (MS) are excised as a propeptide. N-acetylproline is present on P3. An N6,N6,N6-trimethyllysine modification is found at K14. Substrate-binding residues include N123 and T173. Catalysis depends on K175, which acts as the Proton acceptor. Position 177 (K177) interacts with substrate. Mg(2+) is bound by residues K201, D203, and E204. Residue K201 is modified to N6-carboxylysine. H294 acts as the Proton acceptor in catalysis. Residues R295, H327, and S379 each contribute to the substrate site.

Belongs to the RuBisCO large chain family. Type I subfamily. Heterohexadecamer of 8 large chains and 8 small chains; disulfide-linked. The disulfide link is formed within the large subunit homodimers. The cofactor is Mg(2+). The disulfide bond which can form in the large chain dimeric partners within the hexadecamer appears to be associated with oxidative stress and protein turnover.

The protein resides in the plastid. It is found in the chloroplast. The enzyme catalyses 2 (2R)-3-phosphoglycerate + 2 H(+) = D-ribulose 1,5-bisphosphate + CO2 + H2O. It carries out the reaction D-ribulose 1,5-bisphosphate + O2 = 2-phosphoglycolate + (2R)-3-phosphoglycerate + 2 H(+). Functionally, ruBisCO catalyzes two reactions: the carboxylation of D-ribulose 1,5-bisphosphate, the primary event in carbon dioxide fixation, as well as the oxidative fragmentation of the pentose substrate in the photorespiration process. Both reactions occur simultaneously and in competition at the same active site. This chain is Ribulose bisphosphate carboxylase large chain, found in Ananas comosus (Pineapple).